The chain runs to 346 residues: Ribonucleoside-diphosphate reductase subunit beta (346 aa).

Residues glutamate 89, glutamate 120, and histidine 123 each contribute to the Fe cation site. Tyrosine 129 is an active-site residue. The Fe cation site is built by glutamate 193, glutamate 227, and histidine 230.

The protein belongs to the ribonucleoside diphosphate reductase small chain family. In terms of assembly, tetramer of two alpha and two beta subunits. Fe cation is required as a cofactor.

It carries out the reaction a 2'-deoxyribonucleoside 5'-diphosphate + [thioredoxin]-disulfide + H2O = a ribonucleoside 5'-diphosphate + [thioredoxin]-dithiol. Functionally, provides the precursors necessary for DNA synthesis. Catalyzes the biosynthesis of deoxyribonucleotides from the corresponding ribonucleotides. The protein is Ribonucleoside-diphosphate reductase subunit beta (nrdB) of Chlamydia trachomatis serovar D (strain ATCC VR-885 / DSM 19411 / UW-3/Cx).